The chain runs to 331 residues: Type 2 lactosamine alpha-2,3-sialyltransferase (331 aa).

The Cytoplasmic portion of the chain corresponds to 1–4 (MRGY). The chain crosses the membrane as a helical; Signal-anchor for type II membrane protein span at residues 5–25 (LVAIFLSAVFLYYVLHCILWG). Residues 26–331 (TNVYWAAPVE…KNLVINLTQD (306 aa)) are Lumenal-facing. 6 N-linked (GlcNAc...) asparagine glycosylation sites follow: N129, N181, N282, N295, N308, and N327.

This sequence belongs to the glycosyltransferase 29 family.

The protein resides in the golgi apparatus membrane. The enzyme catalyses a neolactoside nLc4Cer(d18:1(4E)) + CMP-N-acetyl-beta-neuraminate = a neolactoside IV(3)-alpha-NeuAc-nLc4Cer(d18:1(4E)) + CMP + H(+). The catalysed reaction is a beta-D-galactosyl-(1-&gt;4)-N-acetyl-beta-D-glucosaminyl derivative + CMP-N-acetyl-beta-neuraminate = an N-acetyl-alpha-neuraminyl-(2-&gt;3)-beta-D-galactosyl-(1-&gt;4)-N-acetyl-beta-D-glucosaminyl derivative + CMP + H(+). It catalyses the reaction a neolactoside nLc6Cer(d18:1(4E)) + CMP-N-acetyl-beta-neuraminate = a neolactoside VI(3)-alpha-NeuNAc-nLc6Cer(d18:1(4E)) + CMP + H(+). Its function is as follows. Transfers the sialyl residue from CMP-N-acetyl-beta-neuraminate to the terminal galactose residue on sugar chains of glycoproteins and glycolipids. It's alpha-2,3-sialyltransferase activity is specific toward type II glycan chains (Galbeta1-4GlcNAc) on glycoproteins and glycolipids such as neolactosides nLc4Cer and nLc6Cer, whose sialyl-products serve as precursors for the Lewis X antigen. Critically involved in the synthesis of functional selectin ligands needed for neutrophil recruitment during inflammation and lymphocyte homing to the lymph nodes. This Pongo abelii (Sumatran orangutan) protein is Type 2 lactosamine alpha-2,3-sialyltransferase (ST3GAL6).